Reading from the N-terminus, the 423-residue chain is CinA-like protein (423 aa).

Belongs to the CinA family.

This Chlorobium chlorochromatii (strain CaD3) protein is CinA-like protein.